The chain runs to 350 residues: Heme A synthase (350 aa).

8 helical membrane-spanning segments follow: residues 16-36 (LARW…VGGI), 77-97 (FQLV…IFFW), 101-121 (HRLL…WFWI), 136-156 (LLAL…SGIV), 170-190 (LLVA…LVAL), 201-221 (GIGL…ALVA), 265-285 (VFLV…VLVV), and 299-321 (IVLH…SGVA). Residue His272 participates in heme binding. Position 328 (His328) interacts with heme.

The protein belongs to the COX15/CtaA family. Type 2 subfamily. Interacts with CtaB. Heme b is required as a cofactor.

It is found in the cell membrane. It carries out the reaction Fe(II)-heme o + 2 A + H2O = Fe(II)-heme a + 2 AH2. It participates in porphyrin-containing compound metabolism; heme A biosynthesis; heme A from heme O: step 1/1. Functionally, catalyzes the conversion of heme O to heme A by two successive hydroxylations of the methyl group at C8. The first hydroxylation forms heme I, the second hydroxylation results in an unstable dihydroxymethyl group, which spontaneously dehydrates, resulting in the formyl group of heme A. This Novosphingobium aromaticivorans (strain ATCC 700278 / DSM 12444 / CCUG 56034 / CIP 105152 / NBRC 16084 / F199) protein is Heme A synthase.